The chain runs to 522 residues: Leucine-rich repeat transmembrane neuronal protein 1 (522 aa).

The first 34 residues, 1 to 34 (MDFLLLGLCLYWLLRRPSGVVLCLLGACFQMLPA), serve as a signal peptide directing secretion. One can recognise an LRRNT domain in the interval 35–63 (APSGCPQLCRCEGRLLYCEALNPTEAPHN). The Extracellular segment spans residues 35 to 427 (APSGCPQLCR…HAENAVQIHK (393 aa)). A glycan (N-linked (GlcNAc...) asparagine) is linked at Asn-63. 10 LRR repeats span residues 64–87 (LSGL…QFTG), 89–111 (MQLT…AFQK), 112–135 (LRRV…TFRP), 137–159 (PNLR…LFHG), 161–183 (RKLT…IFQD), 184–207 (CRSL…SFAG), 209–231 (FKLT…HFPR), 233–255 (ISLH…LDWV), 256–278 (WNLK…VFET), and 279–302 (VPHL…ILNS). N-linked (GlcNAc...) asparagine glycosylation is present at Asn-130. The 52-residue stretch at 314–365 (NLWDCGRNVCALASWLSNFQGRYDGNLQCASPEYAQGEDVLDAVYAFHLCED) folds into the LRRCT domain. Asn-380 is a glycosylation site (N-linked (GlcNAc...) asparagine). The interval 382 to 401 (SDLGPPASSATTLADGGEGQ) is disordered. The chain crosses the membrane as a helical span at residues 428-448 (VVTGTMALIFSFLIVVLVLYV). Residues 449–522 (SWKCFPASLR…HQQPARECEV (74 aa)) lie on the Cytoplasmic side of the membrane.

This sequence belongs to the LRRTM family.

It localises to the cell membrane. It is found in the postsynaptic cell membrane. Its function is as follows. Exhibits strong synaptogenic activity, restricted to excitatory presynaptic differentiation, acting at both pre- and postsynaptic level. The sequence is that of Leucine-rich repeat transmembrane neuronal protein 1 (LRRTM1) from Pongo abelii (Sumatran orangutan).